A 346-amino-acid chain; its full sequence is Phosphoribosylformylglycinamidine cyclo-ligase (346 aa).

Belongs to the AIR synthase family.

It localises to the cytoplasm. It catalyses the reaction 2-formamido-N(1)-(5-O-phospho-beta-D-ribosyl)acetamidine + ATP = 5-amino-1-(5-phospho-beta-D-ribosyl)imidazole + ADP + phosphate + H(+). Its pathway is purine metabolism; IMP biosynthesis via de novo pathway; 5-amino-1-(5-phospho-D-ribosyl)imidazole from N(2)-formyl-N(1)-(5-phospho-D-ribosyl)glycinamide: step 2/2. The sequence is that of Phosphoribosylformylglycinamidine cyclo-ligase from Shewanella pealeana (strain ATCC 700345 / ANG-SQ1).